The chain runs to 375 residues: Putative ZDHHC-type palmitoyltransferase 8 (375 aa).

The next 2 helical transmembrane spans lie at 4-24 (LFDF…TDFL) and 40-60 (VVGM…VSLW). The N-linked (GlcNAc...) asparagine glycan is linked to Asn95. 3 helical membrane-spanning segments follow: residues 105-125 (ITFY…YYYY), 221-241 (FILF…LSFF), and 285-305 (YSFI…ILLF). The 51-residue stretch at 176-226 (VSDGKWSTINKPKSHHCRICKRCIDSMDHHCPFAANCIGINNHHYFILFIG) folds into the DHHC domain. Asn343 is a glycosylation site (N-linked (GlcNAc...) asparagine).

The protein belongs to the DHHC palmitoyltransferase family.

Its subcellular location is the membrane. The catalysed reaction is L-cysteinyl-[protein] + hexadecanoyl-CoA = S-hexadecanoyl-L-cysteinyl-[protein] + CoA. The sequence is that of Putative ZDHHC-type palmitoyltransferase 8 from Dictyostelium discoideum (Social amoeba).